We begin with the raw amino-acid sequence, 393 residues long: Methylthioribose kinase (393 aa).

ATP-binding positions include asparagine 38, lysine 53, and 107-109; that span reads EDL. Aspartate 225 serves as a coordination point for substrate. 242–244 serves as a coordination point for ATP; that stretch reads DPE. A substrate-binding site is contributed by arginine 332.

This sequence belongs to the methylthioribose kinase family. As to quaternary structure, homodimer.

The enzyme catalyses 5-(methylsulfanyl)-D-ribose + ATP = 5-(methylsulfanyl)-alpha-D-ribose 1-phosphate + ADP + H(+). The protein operates within amino-acid biosynthesis; L-methionine biosynthesis via salvage pathway; S-methyl-5-thio-alpha-D-ribose 1-phosphate from S-methyl-5'-thioadenosine (hydrolase route): step 2/2. Its function is as follows. Catalyzes the phosphorylation of methylthioribose into methylthioribose-1-phosphate. The sequence is that of Methylthioribose kinase from Bacillus cereus (strain ATCC 10987 / NRS 248).